Here is a 368-residue protein sequence, read N- to C-terminus: Anti-sigma-X factor RsiX (368 aa).

The span at 73 to 87 (QPQQKEASQENAVTK) shows a compositional bias: polar residues. Residues 73-101 (QPQQKEASQENAVTKTETEDSPKAASSLD) form a disordered region.

It is found in the cell membrane. Functionally, the anti-sigma factor for extracytoplasmic function (ECF) sigma factor SigX, inhibits SigX activity and stabilizes it. This Bacillus subtilis (strain 168) protein is Anti-sigma-X factor RsiX (rsiX).